The primary structure comprises 251 residues: Leucine-rich repeat and calponin homology domain-containing protein 1 (251 aa).

Residues 73–97 (SNGSEYSPNEIRANSPAISPTANST) are disordered. Phosphoserine is present on residues serine 87 and serine 91. Residues 88–97 (PAISPTANST) are compositionally biased toward polar residues. Threonine 123 is subject to Phosphothreonine. In terms of domain architecture, Calponin-homology (CH) spans 131–244 (MREEKELVEH…ITVQALLDVT (114 aa)).

In terms of assembly, interacts (via LRR repeats) with unphosphorylated DOCK8 (via DHR-2 domain); the interaction prevents the interaction between DOCK8 and CDC42.

Its subcellular location is the cytoplasm. In terms of biological role, acts as a negative regulator of GTPase CDC42 by sequestering CDC42-guanine exchange factor DOCK8. Probably by preventing CDC42 activation, negatively regulates CD4(+) T-cell migration. The polypeptide is Leucine-rich repeat and calponin homology domain-containing protein 1 (Felis catus (Cat)).